The sequence spans 563 residues: MNTKELIASELASIIDSLDQEAILKLLETPKNSEMGDIAFPAFSLAKVERKAPQMIAAELAEKMNSQAFEKVVATGPYVNFFLDKSAISAQVLQAVTTEKEHYADQNIGKQENVVIDMSSPNIAKPFSIGHLRSTVIGDSLSHIFQKIGYQTVKVNHLGDWGKQFGMLIVAYKKWGDEEAVKAHPIDELLKLYVRINAEAENDPSLDEEAREWFRKLENGDEEALALWQWFRDESLVEFNRLYNELKVEFDSYNGEAFYNDKMDAVVDILSEKGLLLESEGAQVVNLEKYGIEHPALIKKSDGATLYITRDLAAALYRKNEYQFAKSIYVVGQEQSAHFKQLKAVLQEMGYDWSDDITHVPFGLVTKEGKKLSTRKGNVILLEPTVAEAVSRAKVQIEAKNPELENKDQVAHAVGVGAIKFYDLKTDRTNGYDFDLEAMVSFEGETGPYVQYAYARIQSILRKADFKPETAGNYSLNDTESWEIIKLIQDFPRIINRAADNFEPSIIAKFAISLAQSFNKYYAHTRILDESPERDSRLALSYATAVVLKEALRLLGVEAPEKM.

Residues 121 to 131 (PNIAKPFSIGH) carry the 'HIGH' region motif.

The protein belongs to the class-I aminoacyl-tRNA synthetase family. In terms of assembly, monomer.

It localises to the cytoplasm. The enzyme catalyses tRNA(Arg) + L-arginine + ATP = L-arginyl-tRNA(Arg) + AMP + diphosphate. The protein is Arginine--tRNA ligase of Streptococcus pneumoniae (strain P1031).